A 205-amino-acid polypeptide reads, in one-letter code: ATP phosphoribosyltransferase (205 aa).

Belongs to the ATP phosphoribosyltransferase family. Short subfamily. In terms of assembly, heteromultimer composed of HisG and HisZ subunits.

The protein localises to the cytoplasm. The enzyme catalyses 1-(5-phospho-beta-D-ribosyl)-ATP + diphosphate = 5-phospho-alpha-D-ribose 1-diphosphate + ATP. It participates in amino-acid biosynthesis; L-histidine biosynthesis; L-histidine from 5-phospho-alpha-D-ribose 1-diphosphate: step 1/9. Functionally, catalyzes the condensation of ATP and 5-phosphoribose 1-diphosphate to form N'-(5'-phosphoribosyl)-ATP (PR-ATP). Has a crucial role in the pathway because the rate of histidine biosynthesis seems to be controlled primarily by regulation of HisG enzymatic activity. The chain is ATP phosphoribosyltransferase from Leptospira borgpetersenii serovar Hardjo-bovis (strain JB197).